The chain runs to 286 residues: Protein N-terminal amidase (286 aa).

The CN hydrolase domain occupies Met-1 to Lys-286. Residue Glu-43 is the Proton acceptor of the active site. The active-site Proton donor is Lys-121. Cys-155 (nucleophile) is an active-site residue.

It belongs to the carbon-nitrogen hydrolase superfamily.

The protein localises to the cytoplasm. The protein resides in the nucleus. Its function is as follows. Deamidates N-terminal Asn and Gln. Component of a targeting complex in the N-end rule pathway. The chain is Protein N-terminal amidase (nta1) from Schizosaccharomyces pombe (strain 972 / ATCC 24843) (Fission yeast).